The chain runs to 67 residues: U-myrmeciitoxin(01)-Mg4a (67 aa).

The N-terminal stretch at 1 to 25 (MGKVFFFVLMIAIIGSTFLIEEALG) is a signal peptide.

Belongs to the ant myrmeciitoxin-01 family. As to quaternary structure, homodimer; disulfide-linked. In terms of processing, contains 2 intrachain disulfide bonds (one per chain) and 1 interchain disulfide bond. Expressed by the venom gland.

Its subcellular location is the secreted. This is U-myrmeciitoxin(01)-Mg4a from Myrmecia gulosa (Red bulldog ant).